Consider the following 387-residue polypeptide: MLSRKKTKNEVSKPAEVQGKYVKKETSPLLRNLMPSFIRHGPTIPRRTDLCLPESSASAFSASGDGVVSRNQSFLRTPVQRTPHEVMRRESNRLSAPSSYLVRSLADVPREYGSSQSFLTEVNFAVENGDSGSRYFYSDNFFDGQRRRPLGDRAQEDYRYYEYNHDLFQRMPQNQGRHTSGIGRVTATSLGNLTNHGSEDLPLPPGWSVDWTMRGRKYYIDHNTNTTHWSHPLEREGLPPGWERVESSEFGTYYVDHTNKRAQYRHPCAPSVPRYDQPPPITYQPQQTERNQSLLVPANPYHTAEIPDWLQVYARAPVKYDHILKWELFQLADLDTYQGMLKLLFMKELEQIVKLYEAYRQALVTELENRKQRQQWYAQHHGKKFLS.

2 positions are modified to phosphoserine: serine 95 and serine 138. WW domains lie at 201–234 and 236–269; these read LPLPPGWSVDWTMRGRKYYIDHNTNTTHWSHPLE and EGLPPGWERVESSEFGTYYVDHTNKRAQYRHPCA. Position 212 is a phosphothreonine (threonine 212). The SARAH domain maps to 323 to 370; sequence ILKWELFQLADLDTYQGMLKLLFMKELEQIVKLYEAYRQALVTELENR.

As to quaternary structure, homodimer. Stabilized through interaction with STK3/MST2 or STK4/MST1. Interacts (via SARAH domain) with isoform 1 of NEK2. Interacts with ESR1 only in the presence of STK3/MST2. Interacts with WTIP and AJUBA. Phosphorylated by STK3/MST2 and STK4/MST1. Phosphorylation is not required for SAV1 stability and may increase the number of protein binding sites on the scaffold molecule.

It localises to the nucleus. Its subcellular location is the cytoplasm. Functionally, regulator of STK3/MST2 and STK4/MST1 in the Hippo signaling pathway which plays a pivotal role in organ size control and tumor suppression by restricting proliferation and promoting apoptosis. The core of this pathway is composed of a kinase cascade wherein STK3/MST2 and STK4/MST1, in complex with its regulatory protein SAV1, phosphorylates and activates LATS1/2 in complex with its regulatory protein MOB1, which in turn phosphorylates and inactivates YAP1 oncoprotein and WWTR1/TAZ. Phosphorylation of YAP1 by LATS1/2 inhibits its translocation into the nucleus to regulate cellular genes important for cell proliferation, cell death, and cell migration. SAV1 is required for STK3/MST2 and STK4/MST1 activation and promotes cell-cycle exit and terminal differentiation in developing epithelial tissues. Plays a role in centrosome disjunction by regulating the localization of NEK2 to centrosomes, and its ability to phosphorylate CROCC and CEP250. In conjunction with STK3/MST2, activates the transcriptional activity of ESR1 through the modulation of its phosphorylation. The polypeptide is Protein salvador homolog 1 (Rattus norvegicus (Rat)).